The primary structure comprises 445 residues: Methylenetetrahydrofolate--tRNA-(uracil-5-)-methyltransferase TrmFO (445 aa).

9–14 (GGGLAG) is a binding site for FAD.

This sequence belongs to the MnmG family. TrmFO subfamily. The cofactor is FAD.

It is found in the cytoplasm. It carries out the reaction uridine(54) in tRNA + (6R)-5,10-methylene-5,6,7,8-tetrahydrofolate + NADH + H(+) = 5-methyluridine(54) in tRNA + (6S)-5,6,7,8-tetrahydrofolate + NAD(+). The catalysed reaction is uridine(54) in tRNA + (6R)-5,10-methylene-5,6,7,8-tetrahydrofolate + NADPH + H(+) = 5-methyluridine(54) in tRNA + (6S)-5,6,7,8-tetrahydrofolate + NADP(+). Functionally, catalyzes the folate-dependent formation of 5-methyl-uridine at position 54 (M-5-U54) in all tRNAs. This chain is Methylenetetrahydrofolate--tRNA-(uracil-5-)-methyltransferase TrmFO, found in Rhizorhabdus wittichii (strain DSM 6014 / CCUG 31198 / JCM 15750 / NBRC 105917 / EY 4224 / RW1) (Sphingomonas wittichii).